Consider the following 360-residue polypeptide: Probable L-asparaginase 3 (360 aa).

An N-terminal signal peptide occupies residues 1–16 (MWSSIISFLFFSVALC). N-linked (GlcNAc...) asparagine glycans are attached at residues asparagine 27, asparagine 35, and asparagine 40. Positions 39–359 (PNVTIFAMGG…QNITDIFSLE (321 aa)) constitute an Asparaginase/glutaminase domain. Threonine 49 acts as the O-isoaspartyl threonine intermediate in catalysis. Asparagine 82 carries N-linked (GlcNAc...) asparagine glycosylation. Position 96 (serine 96) interacts with substrate. N-linked (GlcNAc...) asparagine glycosylation is present at asparagine 106. 129–130 (TD) provides a ligand contact to substrate. N-linked (GlcNAc...) asparagine glycosylation is found at asparagine 144, asparagine 179, asparagine 246, asparagine 302, and asparagine 351.

The protein belongs to the asparaginase 1 family.

The protein resides in the secreted. It localises to the cell wall. The enzyme catalyses L-asparagine + H2O = L-aspartate + NH4(+). In Schizosaccharomyces pombe (strain 972 / ATCC 24843) (Fission yeast), this protein is Probable L-asparaginase 3.